The chain runs to 1104 residues: Carbamoyl phosphate synthase large chain (1104 aa).

Residues 1-403 are carboxyphosphate synthetic domain; that stretch reads MPRRQDIQKI…SFQKALRSLE (403 aa). The ATP site is built by Arg129, Arg170, Gly176, Gly177, Gln209, Leu211, Glu216, Gly242, Ile243, His244, Gln286, and Glu300. One can recognise an ATP-grasp 1 domain in the interval 133–329; sequence NEAMDKIGVK…IAKMAAKLAV (197 aa). Mg(2+) is bound by residues Gln286, Glu300, and Asn302. Mn(2+) contacts are provided by Gln286, Glu300, and Asn302. The oligomerization domain stretch occupies residues 404–552; the sequence is TGRAGWGCDK…YSTYEEETEV (149 aa). The carbamoyl phosphate synthetic domain stretch occupies residues 553-966; that stretch reads IPASKPKVMI…AFAKAELGAG (414 aa). An ATP-grasp 2 domain is found at 703–900; that stretch reads EKILQKLNIS…LAKLASLIMS (198 aa). 10 residues coordinate ATP: Arg739, Lys778, Leu780, Glu785, Gly811, Ile812, His813, Ser814, Gln854, and Glu871. Mg(2+)-binding residues include Gln854, Glu871, and Asn873. 3 residues coordinate Mn(2+): Gln854, Glu871, and Asn873. Positions 967-1104 constitute an MGS-like domain; it reads ERLPLTGTVF…KTIQEYCPNF (138 aa). The interval 967–1104 is allosteric domain; the sequence is ERLPLTGTVF…KTIQEYCPNF (138 aa).

This sequence belongs to the CarB family. In terms of assembly, composed of two chains; the small (or glutamine) chain promotes the hydrolysis of glutamine to ammonia, which is used by the large (or ammonia) chain to synthesize carbamoyl phosphate. Tetramer of heterodimers (alpha,beta)4. Mg(2+) is required as a cofactor. Mn(2+) serves as cofactor.

It carries out the reaction hydrogencarbonate + L-glutamine + 2 ATP + H2O = carbamoyl phosphate + L-glutamate + 2 ADP + phosphate + 2 H(+). It catalyses the reaction hydrogencarbonate + NH4(+) + 2 ATP = carbamoyl phosphate + 2 ADP + phosphate + 2 H(+). It functions in the pathway amino-acid biosynthesis; L-arginine biosynthesis; carbamoyl phosphate from bicarbonate: step 1/1. Its pathway is pyrimidine metabolism; UMP biosynthesis via de novo pathway; (S)-dihydroorotate from bicarbonate: step 1/3. Large subunit of the glutamine-dependent carbamoyl phosphate synthetase (CPSase). CPSase catalyzes the formation of carbamoyl phosphate from the ammonia moiety of glutamine, carbonate, and phosphate donated by ATP, constituting the first step of 2 biosynthetic pathways, one leading to arginine and/or urea and the other to pyrimidine nucleotides. The large subunit (synthetase) binds the substrates ammonia (free or transferred from glutamine from the small subunit), hydrogencarbonate and ATP and carries out an ATP-coupled ligase reaction, activating hydrogencarbonate by forming carboxy phosphate which reacts with ammonia to form carbamoyl phosphate. This is Carbamoyl phosphate synthase large chain from Nostoc sp. (strain PCC 7120 / SAG 25.82 / UTEX 2576).